Reading from the N-terminus, the 842-residue chain is Microcephalin (842 aa).

The region spanning 1–93 (MAAPILKDVV…AHIDESLFPA (93 aa)) is the BRCT 1 domain. Phosphoserine occurs at positions 279, 287, 296, and 333. Thr-335 carries the phosphothreonine modification. The span at 346 to 359 (HSRPRSSSVKRKRV) shows a compositional bias: basic residues. Disordered regions lie at residues 346–375 (HSRP…KRKR), 418–443 (PDNL…AQFS), and 563–624 (VGLK…PTRR). 2 stretches are compositionally biased toward polar residues: residues 434 to 443 (QLPSNPAQFS) and 566 to 582 (KSTQ…NSSE). Residues 586 to 608 (PSEHEPRSVVDCNVERSAEEKEN) show a composition bias toward basic and acidic residues. BRCT domains follow at residues 647-737 (SGKG…PFEL) and 758-840 (YRGT…NYLL).

Interacts with CDC27 and maybe other components of the APC/C complex. Interacts with histone variant H2AX under DNA damage conditions.

It localises to the cytoplasm. The protein resides in the cytoskeleton. The protein localises to the microtubule organizing center. Its subcellular location is the centrosome. Functionally, implicated in chromosome condensation and DNA damage induced cellular responses. May play a role in neurogenesis and regulation of the size of the cerebral cortex. The sequence is that of Microcephalin from Macaca fascicularis (Crab-eating macaque).